We begin with the raw amino-acid sequence, 195 residues long: Guanylate kinase (195 aa).

The Guanylate kinase-like domain occupies Gly-12–Leu-191. ATP is bound at residue Gly-19–Gly-26.

It belongs to the guanylate kinase family.

The protein localises to the cytoplasm. It carries out the reaction GMP + ATP = GDP + ADP. In terms of biological role, essential for recycling GMP and indirectly, cGMP. In Mycoplasmoides gallisepticum (strain R(low / passage 15 / clone 2)) (Mycoplasma gallisepticum), this protein is Guanylate kinase (gmk).